Here is a 397-residue protein sequence, read N- to C-terminus: Subtilisin-like protease 3 (397 aa).

The signal sequence occupies residues 1–19; sequence MGCIKVISVFLAAIAAVDA. The propeptide occupies 20–116; it reads RAFFHNRGGS…VEHDRVVKLA (97 aa). In terms of domain architecture, Inhibitor I9 spans 35-116; that stretch reads SYIVVMKDGV…VEHDRVVKLA (82 aa). A Peptidase S8 domain is found at 126–397; it reads TWGLGRVSHR…NRLLYNGSGQ (272 aa). Active-site charge relay system residues include aspartate 158 and histidine 189. Asparagine 250 carries N-linked (GlcNAc...) asparagine glycosylation. The active-site Charge relay system is serine 344. An N-linked (GlcNAc...) asparagine glycan is attached at asparagine 393.

Belongs to the peptidase S8 family.

The protein localises to the secreted. In terms of biological role, secreted subtilisin-like serine protease with keratinolytic activity that contributes to pathogenicity. In Trichophyton equinum (Horse ringworm fungus), this protein is Subtilisin-like protease 3 (SUB3).